The following is a 556-amino-acid chain: Polypyrimidine tract-binding protein 1 (556 aa).

Met-1 carries the post-translational modification N-acetylmethionine. Ser-16 is subject to Phosphoserine. Residues Ala-35–Gly-54 form a disordered region. RRM domains lie at Arg-58–Asn-142, Leu-183–Leu-259, and Ser-362–His-436. A Glycyl lysine isopeptide (Lys-Gly) (interchain with G-Cter in SUMO2) cross-link involves residue Lys-64. Tyr-126 carries the post-translational modification Phosphotyrosine. A Phosphothreonine modification is found at Thr-137. At Ser-140 the chain carries Phosphoserine. A Glycyl lysine isopeptide (Lys-Gly) (interchain with G-Cter in SUMO2) cross-link involves residue Lys-217. The segment at His-436 to Ser-458 is disordered. Ser-458 carries the post-translational modification Phosphoserine. Residues Ala-479–Ser-554 form the RRM 4 domain.

In terms of assembly, monomer. Part of a ternary complex containing KHSRP, PTBP1, PTBP2 and HNRPH1. Interacts with RAVER1 and SFPQ.

The protein localises to the nucleus. In terms of biological role, plays a role in pre-mRNA splicing and in the regulation of alternative splicing events. Activates exon skipping of its own pre-mRNA during muscle cell differentiation. Binds to the polypyrimidine tract of introns. May promote RNA looping when bound to two separate polypyrimidine tracts in the same pre-mRNA. May promote the binding of U2 snRNP to pre-mRNA. Cooperates with RAVER1 to modulate switching between mutually exclusive exons during maturation of the TPM1 pre-mRNA. Represses the splicing of MAPT/Tau exon 10. Binds to polypyrimidine-rich controlling element (PCE) of CFTR and promotes exon skipping of CFTR exon 9, thereby antagonizing TIA1 and its role in exon inclusion of CFTR exon 9. Plays a role in the splicing of pyruvate kinase PKM by binding repressively to a polypyrimidine tract flanking PKM exon 9, inhibiting exon 9 inclusion and resulting in exon 10 inclusion and production of the PKM M2 isoform. The polypeptide is Polypyrimidine tract-binding protein 1 (Ptbp1) (Rattus norvegicus (Rat)).